The following is a 181-amino-acid chain: Inner membrane-spanning protein YciB (181 aa).

Helical transmembrane passes span 8–28 (FPII…ATAA), 53–73 (ITLI…NAIF), 76–96 (WKPT…HFFG), 121–141 (LSWA…VYNF), and 149–169 (FKLF…AFYI).

The protein belongs to the YciB family.

It localises to the cell inner membrane. Plays a role in cell envelope biogenesis, maintenance of cell envelope integrity and membrane homeostasis. This Coxiella burnetii (strain CbuG_Q212) (Coxiella burnetii (strain Q212)) protein is Inner membrane-spanning protein YciB.